The sequence spans 212 residues: Probable GTP-binding protein EngB (212 aa).

The EngB-type G domain maps to 25-199 (FGYEVAFAGR…WAKLDEWMEY (175 aa)). Residues 33–40 (GRSNAGKS), 60–64 (GRTQL), 78–81 (DLPG), 145–148 (TKSD), and 178–180 (FSS) each bind GTP. Mg(2+) contacts are provided by Ser40 and Thr62.

The protein belongs to the TRAFAC class TrmE-Era-EngA-EngB-Septin-like GTPase superfamily. EngB GTPase family. Mg(2+) is required as a cofactor.

Necessary for normal cell division and for the maintenance of normal septation. The chain is Probable GTP-binding protein EngB from Hydrogenovibrio crunogenus (strain DSM 25203 / XCL-2) (Thiomicrospira crunogena).